The chain runs to 266 residues: Probable BRI1 kinase inhibitor 1 (266 aa).

2 disordered regions span residues 1–144 (MTMN…AKTR) and 167–242 (FSRH…SEES). Residues 9-30 (RSQPPPPHPPLFKPTTPPPPPL) show a composition bias toward pro residues. Low complexity predominate over residues 31-40 (LSTSTSTSPP). The span at 77 to 93 (LSHNNYSSKANQHRQTG) shows a compositional bias: polar residues. A compositionally biased stretch (basic and acidic residues) spans 100 to 109 (SKEKDREYKA). Low complexity-rich tracts occupy residues 210–221 (LSSAPASLRASP) and 229–241 (VGGS…SSEE).

Negative regulator of brassinosteroid signaling. The protein is Probable BRI1 kinase inhibitor 1 (BKI1) of Oryza sativa subsp. indica (Rice).